The chain runs to 114 residues: ASAAVSVSPATGLADGATVTVSASGFATSTSATALQCAILADGRGACNVAEFHDFSLSGGEGTTSVVVRRSFTGYVMPDGPEVGAVDCDTAPGGCEIVVGGNTGEYGNAAISFG.

Cystine bridges form between Cys37-Cys47 and Cys88-Cys95.

This sequence belongs to the neocarzinostatin family.

Its function is as follows. Binds non-covalently to an enediyne chromophore which is the cytotoxic and mutagenic component of the antibiotic. The chromophore cleaves duplex DNA site-specifically in a single-stranded manner. The apoprotein cleaves proteins selectively, in particular highly basic histones, with H1 proteins being cleaved the more readily. The chain is Apokedarcidin from Actinomycete sp. (strain L585-6 / ATCC 53650).